Consider the following 1405-residue polypeptide: MKDLLKFLKQQSKTEEFNGIKIGLASPDLIRSWSFGEVKKPETINYRTFKPEREGLFCARIFGPVKDYECLCGKYKRLKHRGVICEKCGVEVTQTKVRRERMGHIELASPVAHIWFLKSLPSRIGLMLDMTLRDIERVLYFESFVVIEPGMTSLERGQMLTEENYLDALEEYGDEFEAKMGAEAVLELLRAIDLEKEIEQMREELPSINSETRRKKVTKRLKLMEAFHTSGNKPEWMILKVLPVLPPDLRPLVPLDGGRFATSDLNDLYRRVINRNNRLKRLLDLAAPDIIVRNEKRMLQESVDALLDNGRRGRAITGSNKRPLKSLADMIKGKQGRFRQNLLGKRVDYSGRSVITVGPTLRLHQCGLPKKMALELFKPFIYGKLEGRGLATTIKAAKKMVEREVAEVWDVLDEVIREHPVMLNRAPTLHRLGIQAFEPVLIEGKAIQLHPLVCAAYNADFDGDQMAVHVPLTLEAQLEARALMMSTNNILSPANGEPVITPSQDVVLGLYYTSRERINGRGEGMYFMSVAEVEKAYATGAAELHARVKVRITETVIGDNGERTEQRRIVDTTVGRALLSQILPAGLSFDLVNQNMGKKQISKLLNTCYRQLGLKDTVIFADQLMYTGFRYATISGASVGIDDMVIPAEKYTLVADAEAEVLEIQEQFQSGLVTAGERYNKVIDIWASANEKVSKAMMENLSTETVINRDGVEEKQASFNSIYMMADSGARGSAAQIRQLAGMRGLMAKPDGSIIETPIVANFREGLNVLQYFISTHGARKGLADTALKTANSGYLTRRLVDVAQDLVVIEDDCGTHEGLTMKPLIEGGDVVEPLRERVLGRVVAVDVLYPGTEDVLAPRNTLLDEAWCDKLEEHSIDEVIVRSVITCDTDFGVCAACYGRDLARGHLINHGEAIGVVAAQSIGEPGTQLTMRTFHIGGAASRASAENNVQVKNSGSLKLHNAKYVTNTDGKLVIVSRSSELAIIDELGREKERYKVPYGTVLEKLEEAAVEAGDIIANWDPHTHPIITEVAGSIKFVDMIDGVTMTRQTDELTGLSSIVILDVGQRGSAGKEMRPMIRLVGADGSDLMIPGTEVPAQYFLPGSAIVNLDDNAQIAVGDALARIPQESSKTRDITGGLPRVADLFEARKPKEPAILAEISGTISFGKETKGKRRLVITPADGGEQYEEMIPKWRNLNVFEGEKVERGEVIADGPEAAHDILRLRGIHNVANYIVNEVQDVYRLQGVKINDKHIEVIIRQMLRKCVITSAGDSEFLEGEQVEVSRVKIANRDLIEQGKVPATFERELLGITKASLATESFISAASFQETTRVLTEAAVGGKSDNLRGLKENVIVGRLIPAGTGYAYHKTRNDARAKKDEPVVVNKITASEAEQNLADLLNLAGSQD.

Zn(2+) contacts are provided by C70, C72, C85, and C88. Mg(2+) is bound by residues D460, D462, and D464. Positions 814, 888, 895, and 898 each coordinate Zn(2+).

This sequence belongs to the RNA polymerase beta' chain family. The RNAP catalytic core consists of 2 alpha, 1 beta, 1 beta' and 1 omega subunit. When a sigma factor is associated with the core the holoenzyme is formed, which can initiate transcription. Mg(2+) serves as cofactor. Requires Zn(2+) as cofactor.

It carries out the reaction RNA(n) + a ribonucleoside 5'-triphosphate = RNA(n+1) + diphosphate. Its function is as follows. DNA-dependent RNA polymerase catalyzes the transcription of DNA into RNA using the four ribonucleoside triphosphates as substrates. The sequence is that of DNA-directed RNA polymerase subunit beta' from Shewanella sp. (strain ANA-3).